The chain runs to 395 residues: MLLKFMYIYGIGCGLMPAPLKKGQFLLGYKQRWYLIYTACLHGGLLTVLPFTFPHYMYDDSYMSSNPVLKWTFNLTNITRIMAMFSGVLLMWFRRKRILNLGENLILHCLKCKTLDNRSKKYSKLRKRVRNVLFQMLLVANLSILLGALILFRIHSVQRISKTAMIVAHITQFIYVVFMMTGICVILLVLHWQSERLQIALKDLCSFLNHEERNSLTLSENKANRSLGKLAKLFKLFAENQRLVREVFRTFDLPIALLLLKMFVTNVNLVYHGVQFGNDTIETSSYTRIVGQWVVISHYWSAVLLMNVVDDVTRRSDLKMGDLLREFSHLELVKRDFHLQLELFSDHLRCHPSTYKVCGLFIFNKQTSLAYFFYVLVQVLVLVQFDLKNKVEKRN.

Topologically, residues 1–32 (MLLKFMYIYGIGCGLMPAPLKKGQFLLGYKQR) are cytoplasmic. The helical transmembrane segment at 33-53 (WYLIYTACLHGGLLTVLPFTF) threads the bilayer. The Extracellular segment spans residues 54-72 (PHYMYDDSYMSSNPVLKWT). Residues 73 to 93 (FNLTNITRIMAMFSGVLLMWF) traverse the membrane as a helical segment. At 94 to 131 (RRKRILNLGENLILHCLKCKTLDNRSKKYSKLRKRVRN) the chain is on the cytoplasmic side. The helical transmembrane segment at 132–152 (VLFQMLLVANLSILLGALILF) threads the bilayer. Topologically, residues 153–169 (RIHSVQRISKTAMIVAH) are extracellular. The chain crosses the membrane as a helical span at residues 170 to 190 (ITQFIYVVFMMTGICVILLVL). The Cytoplasmic segment spans residues 191-250 (HWQSERLQIALKDLCSFLNHEERNSLTLSENKANRSLGKLAKLFKLFAENQRLVREVFRT). Residues 251-271 (FDLPIALLLLKMFVTNVNLVY) traverse the membrane as a helical segment. Residues 272 to 288 (HGVQFGNDTIETSSYTR) lie on the Extracellular side of the membrane. Asn278 carries N-linked (GlcNAc...) asparagine glycosylation. A helical transmembrane segment spans residues 289 to 309 (IVGQWVVISHYWSAVLLMNVV). At 310 to 366 (DDVTRRSDLKMGDLLREFSHLELVKRDFHLQLELFSDHLRCHPSTYKVCGLFIFNKQ) the chain is on the cytoplasmic side. The chain crosses the membrane as a helical span at residues 367-387 (TSLAYFFYVLVQVLVLVQFDL). Topologically, residues 388–395 (KNKVEKRN) are extracellular.

The protein belongs to the insect chemoreceptor superfamily. Gustatory receptor (GR) family. Gr22e subfamily. Expressed in the adult labellar chemosensory neurons.

The protein localises to the cell membrane. Probable gustatory receptor which mediates acceptance or avoidance behavior, depending on its substrates. The protein is Putative gustatory receptor 58a (Gr58a) of Drosophila melanogaster (Fruit fly).